The following is a 381-amino-acid chain: NF-kappa-B inhibitor-like protein 1 (381 aa).

Residues 1–34 form a disordered region; that stretch reads MSNPSPQVPEEEASTSVCRPKSSMASTSRRQRRE. 2 ANK repeats span residues 64–93 and 97–133; these read GQPP…DPAH and HGDT…IKNK. Disordered stretches follow at residues 131-167, 186-242, and 256-294; these read KNKD…EWRQ, GDAS…QEEE, and ELRE…RGSL. A Phosphoserine modification is found at serine 150. The span at 150-159 shows a compositional bias: acidic residues; it reads SAEEEEEDDA. The span at 256-287 shows a compositional bias: basic and acidic residues; the sequence is ELRESRARRAQEALGDREPKPARAGPRAEHPR.

In terms of assembly, interacts with CACTIN (via N-terminal domain); the interaction occurs in a pro-inflammatory-independent manner.

It is found in the nucleus. Involved in the regulation of innate immune response. Acts as negative regulator of Toll-like receptor and interferon-regulatory factor (IRF) signaling pathways. Contributes to the negative regulation of transcriptional activation of NF-kappa-B target genes in response to endogenous pro-inflammatory stimuli. The sequence is that of NF-kappa-B inhibitor-like protein 1 (NFKBIL1) from Macaca mulatta (Rhesus macaque).